Here is a 263-residue protein sequence, read N- to C-terminus: Imidazole glycerol phosphate synthase subunit HisF (263 aa).

Active-site residues include Asp-22 and Asp-141.

It belongs to the HisA/HisF family. Heterodimer of HisH and HisF.

It is found in the cytoplasm. The catalysed reaction is 5-[(5-phospho-1-deoxy-D-ribulos-1-ylimino)methylamino]-1-(5-phospho-beta-D-ribosyl)imidazole-4-carboxamide + L-glutamine = D-erythro-1-(imidazol-4-yl)glycerol 3-phosphate + 5-amino-1-(5-phospho-beta-D-ribosyl)imidazole-4-carboxamide + L-glutamate + H(+). Its pathway is amino-acid biosynthesis; L-histidine biosynthesis; L-histidine from 5-phospho-alpha-D-ribose 1-diphosphate: step 5/9. Its function is as follows. IGPS catalyzes the conversion of PRFAR and glutamine to IGP, AICAR and glutamate. The HisF subunit catalyzes the cyclization activity that produces IGP and AICAR from PRFAR using the ammonia provided by the HisH subunit. The chain is Imidazole glycerol phosphate synthase subunit HisF from Clavibacter michiganensis subsp. michiganensis (strain NCPPB 382).